Consider the following 504-residue polypeptide: Anaerobic nitric oxide reductase transcription regulator NorR (504 aa).

Asp57 is subject to 4-aspartylphosphate. The Sigma-54 factor interaction domain maps to 187–416; sequence MIGLSPGMTQ…LEHAIHRAVV (230 aa). Residues 215–222 and 278–287 contribute to the ATP site; these read GETGTGKE and ADNGTLFLDE. Positions 479-498 form a DNA-binding region, H-T-H motif; sequence WAACARMLETDVANLHRLAK.

It functions in the pathway nitrogen metabolism; nitric oxide reduction. Required for the expression of anaerobic nitric oxide (NO) reductase, acts as a transcriptional activator for at least the norVW operon. Activation also requires sigma-54. This chain is Anaerobic nitric oxide reductase transcription regulator NorR, found in Escherichia coli O127:H6 (strain E2348/69 / EPEC).